Here is a 151-residue protein sequence, read N- to C-terminus: Ribosome maturation factor RimP (151 aa).

This sequence belongs to the RimP family.

It localises to the cytoplasm. Required for maturation of 30S ribosomal subunits. The chain is Ribosome maturation factor RimP from Haemophilus influenzae (strain PittEE).